The chain runs to 58 residues: Photosystem II reaction center protein K (58 aa).

Residues 1-21 constitute a propeptide that is removed on maturation; it reads MFNAYLDTVLDLSANGTVILA. Residues 29 to 49 traverse the membrane as a helical segment; it reads IFDPIVDVMPIIPVFFLLLAF.

Belongs to the PsbK family. As to quaternary structure, PSII is composed of 1 copy each of membrane proteins PsbA, PsbB, PsbC, PsbD, PsbE, PsbF, PsbH, PsbI, PsbJ, PsbK, PsbL, PsbM, PsbT, PsbX, PsbY, PsbZ, Psb30/Ycf12, at least 3 peripheral proteins of the oxygen-evolving complex and a large number of cofactors. It forms dimeric complexes.

It localises to the plastid. The protein localises to the chloroplast thylakoid membrane. Functionally, one of the components of the core complex of photosystem II (PSII). PSII is a light-driven water:plastoquinone oxidoreductase that uses light energy to abstract electrons from H(2)O, generating O(2) and a proton gradient subsequently used for ATP formation. It consists of a core antenna complex that captures photons, and an electron transfer chain that converts photonic excitation into a charge separation. This is Photosystem II reaction center protein K from Staurastrum punctulatum (Green alga).